The following is a 311-amino-acid chain: MQENQQITKKEQYNLNKLQKRLRRNVGEAIADFNMIEEGDRIMVCLSGGKDSYTMLEILRNLQQSAPINFSLVAVNLDQKQPGFPEHVLPEYLEKLGVEYKIVEENTYGIVKEKIPEGKTTCSLCSRLRRGILYRTATELGATKIALGHHRDDILQTLFLNMFYGGKMKGMPPKLMSDDGKHIVIRPLAYCREKDIQRFADAKAFPIIPCNLCGSQPNLQRQVIADMLRDWDKRYPGRIETMFSAMQNVVPSHLCDTNLFDFKGITHGSEVVNGGDLAFDREEIPLQPAGWQPEEDENQLDELRLNVVEVK.

Positions 47 to 52 (SGGKDS) match the PP-loop motif motif. Residues Cys-122, Cys-125, and Cys-213 each coordinate [4Fe-4S] cluster.

It belongs to the TtcA family. As to quaternary structure, homodimer. It depends on Mg(2+) as a cofactor. The cofactor is [4Fe-4S] cluster.

The protein localises to the cytoplasm. The catalysed reaction is cytidine(32) in tRNA + S-sulfanyl-L-cysteinyl-[cysteine desulfurase] + AH2 + ATP = 2-thiocytidine(32) in tRNA + L-cysteinyl-[cysteine desulfurase] + A + AMP + diphosphate + H(+). The protein operates within tRNA modification. In terms of biological role, catalyzes the ATP-dependent 2-thiolation of cytidine in position 32 of tRNA, to form 2-thiocytidine (s(2)C32). The sulfur atoms are provided by the cysteine/cysteine desulfurase (IscS) system. The protein is tRNA-cytidine(32) 2-sulfurtransferase of Escherichia coli O157:H7.